A 294-amino-acid chain; its full sequence is Complement C1q tumor necrosis factor-related protein 2 (294 aa).

The N-terminal stretch at 1 to 24 is a signal peptide; that stretch reads MTIFKKVTTMISWVLLACALPCAA. The segment at 42 to 156 is disordered; the sequence is QLVCSLPGPQ…PGPCSCGSSR (115 aa). A Collagen-like domain is found at 48–150; sequence PGPQGPPGPP…KGEPGLPGPC (103 aa). A compositionally biased stretch (pro residues) spans 50–59; sequence PQGPPGPPGA. Over residues 75–87 the composition is skewed to basic and acidic residues; that stretch reads DGQDGQDGDRGDS. A compositionally biased stretch (low complexity) spans 105-129; the sequence is KGKAGAIGRAGPRGPKGVSGTPGKH. The C1q domain occupies 154–290; that stretch reads SSRAKSAFSV…GFLIYADQGD (137 aa).

May interact with ERFE.

The protein localises to the secreted. Functionally, involved in the regulation of lipid metabolism in adipose tissue and liver. In Mus musculus (Mouse), this protein is Complement C1q tumor necrosis factor-related protein 2 (C1qtnf2).